Here is a 379-residue protein sequence, read N- to C-terminus: Leukocyte elastase inhibitor A (379 aa).

The residue at position 300 (serine 300) is a Phosphoserine.

It belongs to the serpin family. Ov-serpin subfamily. In terms of assembly, monomer.

It localises to the secreted. The protein localises to the cytoplasm. Its subcellular location is the cytolytic granule. It is found in the early endosome. Its function is as follows. Regulates the activity of the neutrophil proteases. This is Leukocyte elastase inhibitor A (Serpinb1a) from Rattus norvegicus (Rat).